A 270-amino-acid chain; its full sequence is Phosphatidylinositol transfer protein alpha isoform (270 aa).

A 1,2-diacyl-sn-glycero-3-phospho-(1D-myo-inositol) is bound by residues threonine 58, lysine 60, glutamate 85, asparagine 89, threonine 96, and lysine 194. Position 215 is an N6-acetyllysine (lysine 215).

Belongs to the PtdIns transfer protein family. PI transfer class I subfamily. In terms of processing, phosphorylated by PKC in a calcium and phosphatidylserine-dependent manner.

Its subcellular location is the cytoplasm. The protein resides in the nucleus. The enzyme catalyses a 1,2-diacyl-sn-glycero-3-phosphocholine(in) = a 1,2-diacyl-sn-glycero-3-phosphocholine(out). It catalyses the reaction a 1,2-diacyl-sn-glycero-3-phospho-(1D-myo-inositol)(in) = a 1,2-diacyl-sn-glycero-3-phospho-(1D-myo-inositol)(out). Functionally, catalyzes the transfer of phosphatidylinositol (PI) and phosphatidylcholine (PC) between membranes. Shows a preference for PI and PC containing shorter saturated or monosaturated acyl chains at the sn-1 and sn-2 positions. Preference order for PC is C16:1 &gt; C16:0 &gt; C18:1 &gt; C18:0 &gt; C20:4 and for PI is C16:1 &gt; C16:0 &gt; C18:1 &gt; C18:0 &gt; C20:4 &gt; C20:3. The polypeptide is Phosphatidylinositol transfer protein alpha isoform (PITPNA) (Bos taurus (Bovine)).